Here is a 505-residue protein sequence, read N- to C-terminus: Histidine ammonia-lyase (505 aa).

The segment at residues 141 to 143 (ASG) is a cross-link (5-imidazolinone (Ala-Gly)). Position 142 is a 2,3-didehydroalanine (Ser) (Ser142).

Belongs to the PAL/histidase family. Post-translationally, contains an active site 4-methylidene-imidazol-5-one (MIO), which is formed autocatalytically by cyclization and dehydration of residues Ala-Ser-Gly.

It is found in the cytoplasm. The catalysed reaction is L-histidine = trans-urocanate + NH4(+). Its pathway is amino-acid degradation; L-histidine degradation into L-glutamate; N-formimidoyl-L-glutamate from L-histidine: step 1/3. This is Histidine ammonia-lyase from Bacillus cereus (strain G9842).